A 154-amino-acid chain; its full sequence is Protein X (154 aa).

The tract at residues Pro-68 to Phe-117 is mitochondrial targeting sequence.

Belongs to the orthohepadnavirus protein X family. In terms of assembly, may form homodimer. May interact with host CEBPA, CFLAR, CREB1, DDB1, E4F1, HBXIP, HSPD1/HSP60, NFKBIA, POLR2E and SMAD4. Interacts with host SMC5-SMC6 complex and induces its degradation. Interacts with host TRPC4AP; leading to prevent ubiquitination of TRPC4AP. Interacts with host PLSCR1; this interaction promotes ubiquitination and degradation of HBx and impairs HBx-mediated cell proliferation. A fraction may be phosphorylated in insect cells and HepG2 cells, a human hepatoblastoma cell line. Phosphorylated in vitro by host protein kinase C or mitogen-activated protein kinase. N-acetylated in insect cells.

The protein localises to the host cytoplasm. It localises to the host nucleus. It is found in the host mitochondrion. Its function is as follows. Multifunctional protein that plays a role in silencing host antiviral defenses and promoting viral transcription. Does not seem to be essential for HBV infection. May be directly involved in development of cirrhosis and liver cancer (hepatocellular carcinoma). Most of cytosolic activities involve modulation of cytosolic calcium. The effect on apoptosis is controversial depending on the cell types in which the studies have been conducted. May induce apoptosis by localizing in mitochondria and causing loss of mitochondrial membrane potential. May also modulate apoptosis by binding host CFLAR, a key regulator of the death-inducing signaling complex (DISC). Promotes viral transcription by using the host E3 ubiquitin ligase DDB1 to target the SMC5-SMC6 complex to proteasomal degradation. This host complex would otherwise bind to viral episomal DNA, and prevents its transcription. Moderately stimulates transcription of many different viral and cellular transcription elements. Promoters and enhancers stimulated by HBx contain DNA binding sites for NF-kappa-B, AP-1, AP-2, c-EBP, ATF/CREB, or the calcium-activated factor NF-AT. This is Protein X from Homo sapiens (Human).